The primary structure comprises 466 residues: Probable sensor protein PcoS (466 aa).

Residues 1 to 10 (MRFKISLTTR) are Cytoplasmic-facing. A helical transmembrane segment spans residues 11–31 (LSLIFSAVMLTVWWLSSFILI). At 32–171 (STLNDYFDNQ…HTLLMDKLST (140 aa)) the chain is on the periplasmic side. The helical transmembrane segment at 172-192 (WLFWFNIGLVFISVFLGWLTT) threads the bilayer. The HAMP domain occupies 193–246 (RIGLKPLREMTSLASSMTVHSLDQRLNPDLAPPEISETMQEFNNMFDRLEGAFR). Topologically, residues 193–466 (RIGLKPLREM…IVFKVRLLMD (274 aa)) are cytoplasmic. Residues 254 to 466 (DIAHELRTPV…IVFKVRLLMD (213 aa)) enclose the Histidine kinase domain. A Phosphohistidine; by autocatalysis modification is found at His-257.

The protein resides in the cell inner membrane. It catalyses the reaction ATP + protein L-histidine = ADP + protein N-phospho-L-histidine.. Its function is as follows. Probable member of a two-component regulatory system PcoS/PcoR. May activate PcoR by phosphorylation. In Escherichia coli, this protein is Probable sensor protein PcoS (pcoS).